The sequence spans 318 residues: MMIMREILISECIELLRSHKFIVSKPLGRSCFDMVASKEDIRLILKILKNIDSLSRDQSKELKKISKILHGTPLIIGIRTRNAPMEHGVVYDRYNIKAVTFETFRDYLEGSPPMVYANRGGFFVKIDGKVLKEVREAMGISVGKLAEVAGVSRKAIYKYETQMANPSVDVALKIEEFLDVPLVKGIDLFEPVDDEDVENKLENLEDFKKEAINFLNELGFKSFVVEKAPFDAVAEKDMDNNLNILLTNIEEKDNEEVKRKALFVRELSRLLDGYSLLILEEKEKEYKNLPVVSIEELKKMDDALELIEHIKSMLRDIR.

In terms of domain architecture, HTH cro/C1-type spans 131 to 189; the sequence is LKEVREAMGISVGKLAEVAGVSRKAIYKYETQMANPSVDVALKIEEFLDVPLVKGIDLF. Residues 142–161 constitute a DNA-binding region (H-T-H motif); that stretch reads VGKLAEVAGVSRKAIYKYET.

The chain is Putative HTH-type transcriptional regulatory protein MJ1164 from Methanocaldococcus jannaschii (strain ATCC 43067 / DSM 2661 / JAL-1 / JCM 10045 / NBRC 100440) (Methanococcus jannaschii).